We begin with the raw amino-acid sequence, 134 residues long: Large ribosomal subunit protein uL16c (134 aa).

The protein belongs to the universal ribosomal protein uL16 family. As to quaternary structure, part of the 50S ribosomal subunit.

Its subcellular location is the plastid. It localises to the chloroplast. In Nephroselmis olivacea (Green alga), this protein is Large ribosomal subunit protein uL16c.